The primary structure comprises 350 residues: GTPase Obg (350 aa).

One can recognise an Obg domain in the interval 1–159 (MKLVDEAEIL…RLLKLELRLL (159 aa)). Positions 127 to 146 (NMHFKSSVNRAPRQSTTGEE) are disordered. The segment covering 130 to 143 (FKSSVNRAPRQSTT) has biased composition (polar residues). One can recognise an OBG-type G domain in the interval 160-337 (ADVGLLGFPN…IMKDVMAFFD (178 aa)). GTP is bound by residues 166–173 (GFPNAGKS), 191–195 (FTTLY), 213–216 (DVPG), 287–290 (NKAD), and 318–320 (SAL). Mg(2+) is bound by residues Ser173 and Thr193.

It belongs to the TRAFAC class OBG-HflX-like GTPase superfamily. OBG GTPase family. As to quaternary structure, monomer. The cofactor is Mg(2+).

The protein resides in the cytoplasm. Its function is as follows. An essential GTPase which binds GTP, GDP and possibly (p)ppGpp with moderate affinity, with high nucleotide exchange rates and a fairly low GTP hydrolysis rate. Plays a role in control of the cell cycle, stress response, ribosome biogenesis and in those bacteria that undergo differentiation, in morphogenesis control. The chain is GTPase Obg from Xanthomonas oryzae pv. oryzae (strain MAFF 311018).